A 150-amino-acid chain; its full sequence is MEKMSDLPRELVEEILSRVPVKSMREVRVTCKTWNALSKHISKAEAAREGEFLGIAKKKFCRNSFLLFSIPWLRVLIVVDFSNAMKDAMKDAMKEIRSSFQAMRLIVANYDIATLSAFGEEQLAVLFQPFEGYVMEIWVTTKIEPSAVSS.

Residues 1 to 47 (MEKMSDLPRELVEEILSRVPVKSMREVRVTCKTWNALSKHISKAEAA) form the F-box domain.

The protein is Putative F-box protein At2g33655 of Arabidopsis thaliana (Mouse-ear cress).